The chain runs to 203 residues: Glycerol-3-phosphate acyltransferase (203 aa).

4 helical membrane-spanning segments follow: residues 4–24 (MAVT…AVLI), 80–100 (PVLL…PLFF), 117–137 (PIGL…AILF), and 139–159 (YSSL…WMIK).

The protein belongs to the PlsY family. As to quaternary structure, probably interacts with PlsX.

Its subcellular location is the cell inner membrane. It carries out the reaction an acyl phosphate + sn-glycerol 3-phosphate = a 1-acyl-sn-glycero-3-phosphate + phosphate. The protein operates within lipid metabolism; phospholipid metabolism. Its function is as follows. Catalyzes the transfer of an acyl group from acyl-phosphate (acyl-PO(4)) to glycerol-3-phosphate (G3P) to form lysophosphatidic acid (LPA). This enzyme utilizes acyl-phosphate as fatty acyl donor, but not acyl-CoA or acyl-ACP. The protein is Glycerol-3-phosphate acyltransferase of Vibrio vulnificus (strain YJ016).